A 271-amino-acid chain; its full sequence is Mannosyl-3-phosphoglycerate phosphatase (271 aa).

The Nucleophile role is filled by Asp13. Positions 13, 15, and 214 each coordinate Mg(2+).

The protein belongs to the HAD-like hydrolase superfamily. MPGP family. Mg(2+) serves as cofactor.

The protein resides in the cytoplasm. The enzyme catalyses 2-O-(alpha-D-mannosyl)-3-phosphoglycerate + H2O = (2R)-2-O-(alpha-D-mannosyl)-glycerate + phosphate. In Shigella boydii serotype 4 (strain Sb227), this protein is Mannosyl-3-phosphoglycerate phosphatase (yedP).